A 527-amino-acid chain; its full sequence is Lysine--tRNA ligase (527 aa).

2 residues coordinate Mg(2+): Glu431 and Glu438.

Belongs to the class-II aminoacyl-tRNA synthetase family. As to quaternary structure, homodimer. The cofactor is Mg(2+).

It localises to the cytoplasm. It catalyses the reaction tRNA(Lys) + L-lysine + ATP = L-lysyl-tRNA(Lys) + AMP + diphosphate. The protein is Lysine--tRNA ligase (lysS) of Chlamydia pneumoniae (Chlamydophila pneumoniae).